A 74-amino-acid polypeptide reads, in one-letter code: Sec-independent protein translocase protein TatA (74 aa).

A helical transmembrane segment spans residues 1 to 21; sequence MGGISIWNLVIIVLLVVLLFG. The disordered stretch occupies residues 51-74; the sequence is AEFEKVEQKTAESTEQKAKEKEQA.

It belongs to the TatA/E family. In terms of assembly, the Tat system comprises two distinct complexes: a TatABC complex, containing multiple copies of TatA, TatB and TatC subunits, and a separate TatA complex, containing only TatA subunits. Substrates initially bind to the TatABC complex, which probably triggers association of the separate TatA complex to form the active translocon.

The protein resides in the cell inner membrane. Its function is as follows. Part of the twin-arginine translocation (Tat) system that transports large folded proteins containing a characteristic twin-arginine motif in their signal peptide across membranes. TatA could form the protein-conducting channel of the Tat system. The protein is Sec-independent protein translocase protein TatA of Glaesserella parasuis serovar 5 (strain SH0165) (Haemophilus parasuis).